A 227-amino-acid polypeptide reads, in one-letter code: AN1-type zinc finger protein 3 (227 aa).

The A20-type zinc finger occupies proline 12–proline 44. The Zn(2+) site is built by cysteine 18, cysteine 20, cysteine 32, and cysteine 35. Disordered regions lie at residues lysine 41–glycine 100 and proline 113–arginine 148. Polar residues predominate over residues alanine 49–leucine 59. The span at serine 66–threonine 77 shows a compositional bias: low complexity. Composition is skewed to polar residues over residues leucine 78–proline 94 and proline 113–glutamate 127. A compositionally biased stretch (basic and acidic residues) spans arginine 135–arginine 148. An AN1-type zinc finger spans residues glutamine 151–glycine 200. Zn(2+) is bound by residues cysteine 157, cysteine 160, cysteine 174, cysteine 176, cysteine 181, histidine 184, histidine 190, and cysteine 192.

The sequence is that of AN1-type zinc finger protein 3 (ZFAND3) from Homo sapiens (Human).